An 819-amino-acid polypeptide reads, in one-letter code: ATP-dependent DNA helicase PIF4 (819 aa).

The N-terminal 84 residues, 1–84 (MLLNSTRTLL…RQASSAGHND (84 aa)), are a transit peptide targeting the mitochondrion. The disordered stretch occupies residues 76–101 (QASSAGHNDLGLQEKEKSSGDESAFS). Residue 126 to 133 (GGAGVGKS) participates in ATP binding. The DNA-binding element occupies 734–754 (HIIYVAASRVKKFSQLRMINV).

This sequence belongs to the helicase family. PIF1 subfamily. As to quaternary structure, monomer. Mg(2+) serves as cofactor.

It localises to the mitochondrion matrix. It is found in the kinetoplast. The enzyme catalyses Couples ATP hydrolysis with the unwinding of duplex DNA at the replication fork by translocating in the 5'-3' direction. This creates two antiparallel DNA single strands (ssDNA). The leading ssDNA polymer is the template for DNA polymerase III holoenzyme which synthesizes a continuous strand.. The catalysed reaction is ATP + H2O = ADP + phosphate + H(+). In terms of biological role, DNA-dependent ATPase and 5'-3' DNA helicase required for the maintenance of mitochondrial (kinetoplast) genome stability. In Trypanosoma brucei brucei (strain 927/4 GUTat10.1), this protein is ATP-dependent DNA helicase PIF4.